Here is a 767-residue protein sequence, read N- to C-terminus: Syn-copalyl diphosphate synthase (767 aa).

The segment at 45-74 is disordered; that stretch reads GPMLISKSPPYPASEETREWEAEGQHEHTD. Residues 59–74 are compositionally biased toward basic and acidic residues; sequence EETREWEAEGQHEHTD. Position 233 (Lys233) interacts with substrate. Asp365 and Asp367 together coordinate Mg(2+). A DXDD motif motif is present at residues 365-368; the sequence is DIDD. Lys453 is a substrate binding site.

Mg(2+) is required as a cofactor.

It carries out the reaction (2E,6E,10E)-geranylgeranyl diphosphate = 9alpha-copalyl diphosphate. Functionally, catalyzes the conversion of geranylgeranyl diphosphate to the phytoalexin precursor syn-copalyl diphosphate. The chain is Syn-copalyl diphosphate synthase (CPS4) from Oryza sativa subsp. indica (Rice).